The sequence spans 127 residues: Large ribosomal subunit protein bL12 (127 aa).

The protein belongs to the bacterial ribosomal protein bL12 family. As to quaternary structure, homodimer. Part of the ribosomal stalk of the 50S ribosomal subunit. Forms a multimeric L10(L12)X complex, where L10 forms an elongated spine to which 2 to 4 L12 dimers bind in a sequential fashion. Binds GTP-bound translation factors.

In terms of biological role, forms part of the ribosomal stalk which helps the ribosome interact with GTP-bound translation factors. Is thus essential for accurate translation. The polypeptide is Large ribosomal subunit protein bL12 (Caulobacter vibrioides (strain ATCC 19089 / CIP 103742 / CB 15) (Caulobacter crescentus)).